Reading from the N-terminus, the 206-residue chain is MGGKWSKSSVIGWPTVRERMRRAEPAADGVGAASQDLEKHGAITSSNTAATNADCAWLEAQEEEEVGFPVTPQVPLRPMTYKAAVDLSHFLKEKGGLEGLIHSQRRQDILDLWIYHTQGYFPDWQNYTPGPGIRYPLTFGWCYKLVPVEPEKLEEANKGENTSLLHPVSLHGMDDPEREVLEWRFDSRLAFHHVARELHPEYFKNC.

Residue Gly2 is the site of N-myristoyl glycine; by host attachment. Ser6 is subject to Phosphoserine; by host. The acidic; interacts with host PACS1 and PACS2; stabilizes the interaction of NEF/MHC-I with host AP1M1; necessary for MHC-I internalization stretch occupies residues Glu62–Glu65. Residues Pro69 to Pro78 are SH3-binding; interaction with Src family tyrosine kinases. The PxxP; stabilizes the interaction of NEF/MHC-I with host AP1M1; necessary for MHC-I internalization motif lies at Pro72 to Pro75. Residues Asp108–Trp124 are mediates dimerization, Nef-PTE1 interaction. Residues Val148 to Val180 form a binding to ATP6V1H region. The Dileucine internalization motif; necessary for CD4 internalization signature appears at Leu164–Leu165. The Diacidic; necessary for CD4 internalization motif lies at Asp174–Asp175.

The protein belongs to the lentivirus primate group Nef protein family. In terms of assembly, monomer; cytosolic form. Homodimer; membrane bound form. Interacts with Nef associated p21-activated kinase (PAK2); this interaction activates PAK2. Associates with the Nef-MHC-I-AP1 complex; this complex is required for MHC-I internalization. Interacts (via C-terminus) with host PI3-kinase. Interacts with host PACS1; this interaction seems to be weak. Interacts with host PACS2. Interacts with host LCK and MAPK3; these interactions inhibit the kinase activity of the latter. Interacts with host ATP6V1H; this interaction may play a role in CD4 endocytosis. Associates with the CD4-Nef-AP2 complex; this complex is required for CD4 internalization. Interacts with host AP2 subunit alpha and AP2 subunit sigma2. Interacts with TCR-zeta chain; this interaction up-regulates the Fas ligand (FasL) surface expression. Interacts with host HCK, LYN, and SRC; these interactions activate the Src family kinases. Interacts with MAP3K5; this interaction inhibits the Fas and TNFR-mediated death signals. Interacts with beta-COP and PTE1. Interacts with human RACK1; this increases Nef phosphorylation by PKC. Interacts with TP53; this interaction decreases the half-life of TP53, protecting the infected cell against p53-mediated apoptosis. The virion-associated Nef proteins are cleaved by the viral protease to release the soluble C-terminal core protein. Nef is probably cleaved concomitantly with viral structural proteins on maturation of virus particles. Post-translationally, myristoylated. In terms of processing, phosphorylated on serine residues, probably by host PKCdelta and theta.

It localises to the host cell membrane. The protein localises to the virion. Its subcellular location is the secreted. The protein resides in the host Golgi apparatus membrane. In terms of biological role, factor of infectivity and pathogenicity, required for optimal virus replication. Alters numerous pathways of T-lymphocyte function and down-regulates immunity surface molecules in order to evade host defense and increase viral infectivity. Alters the functionality of other immunity cells, like dendritic cells, monocytes/macrophages and NK cells. In infected CD4(+) T-lymphocytes, down-regulates the surface MHC-I, mature MHC-II, CD4, CD28, CCR5 and CXCR4 molecules. Mediates internalization and degradation of host CD4 through the interaction of with the cytoplasmic tail of CD4, the recruitment of AP-2 (clathrin adapter protein complex 2), internalization through clathrin coated pits, and subsequent transport to endosomes and lysosomes for degradation. Diverts host MHC-I molecules to the trans-Golgi network-associated endosomal compartments by an endocytic pathway to finally target them for degradation. MHC-I down-regulation may involve AP-1 (clathrin adapter protein complex 1) or possibly Src family kinase-ZAP70/Syk-PI3K cascade recruited by PACS2. In consequence infected cells are masked for immune recognition by cytotoxic T-lymphocytes. Decreasing the number of immune receptors also prevents reinfection by more HIV particles (superinfection). Down-regulates host SERINC3 and SERINC5 thereby excluding these proteins from the viral particles. Virion infectivity is drastically higher when SERINC3 or SERINC5 are excluded from the viral envelope, because these host antiviral proteins impair the membrane fusion event necessary for subsequent virion penetration. Its function is as follows. Bypasses host T-cell signaling by inducing a transcriptional program nearly identical to that of anti-CD3 cell activation. Interaction with TCR-zeta chain up-regulates the Fas ligand (FasL). Increasing surface FasL molecules and decreasing surface MHC-I molecules on infected CD4(+) cells send attacking cytotoxic CD8+ T-lymphocytes into apoptosis. Functionally, plays a role in optimizing the host cell environment for viral replication without causing cell death by apoptosis. Protects the infected cells from apoptosis in order to keep them alive until the next virus generation is ready to strike. Inhibits the Fas and TNFR-mediated death signals by blocking MAP3K5/ASK1. Decreases the half-life of TP53, protecting the infected cell against p53-mediated apoptosis. Inhibits the apoptotic signals regulated by the Bcl-2 family proteins through the formation of a Nef/PI3-kinase/PAK2 complex that leads to activation of PAK2 and induces phosphorylation of host BAD. In terms of biological role, extracellular Nef protein targets CD4(+) T-lymphocytes for apoptosis by interacting with CXCR4 surface receptors. The sequence is that of Protein Nef from Human immunodeficiency virus type 1 group M subtype B (isolate LW123) (HIV-1).